Here is a 708-residue protein sequence, read N- to C-terminus: Polyribonucleotide nucleotidyltransferase (708 aa).

Positions 490 and 496 each coordinate Mg(2+). The KH domain maps to 557-619; sequence PRIETMTIPK…KSIDDAIRLI (63 aa). The region spanning 629–699 is the S1 motif domain; the sequence is GEVYKGKVRS…KTGKFKLSRK (71 aa).

Belongs to the polyribonucleotide nucleotidyltransferase family. Mg(2+) serves as cofactor.

The protein resides in the cytoplasm. The enzyme catalyses RNA(n+1) + phosphate = RNA(n) + a ribonucleoside 5'-diphosphate. Functionally, involved in mRNA degradation. Catalyzes the phosphorolysis of single-stranded polyribonucleotides processively in the 3'- to 5'-direction. This is Polyribonucleotide nucleotidyltransferase from Bacteroides fragilis (strain ATCC 25285 / DSM 2151 / CCUG 4856 / JCM 11019 / LMG 10263 / NCTC 9343 / Onslow / VPI 2553 / EN-2).